Here is a 98-residue protein sequence, read N- to C-terminus: Complement inhibitor RaCI1 (98 aa).

An N-terminal signal peptide occupies residues 1–20 (MNAMLVLFIASALFISEHNT). 3 cysteine pairs are disulfide-bonded: Cys-33/Cys-57, Cys-38/Cys-59, and Cys-53/Cys-74. Residues 79–98 (TTKPPMAPGDNKDNKEEESN) form a disordered region. The segment covering 88–98 (DNKDNKEEESN) has biased composition (basic and acidic residues).

The protein belongs to the RaCI family. Expressed in salivary glands.

The protein localises to the secreted. Complement inhibitor. Prevents complement-mediated C5 activation by binding to C5. Binds C5 at a different binding site than the other tick complement inhibitors OmCI and CirpT1, and the drug eculizumab. Inhibits the complement in human and guinea pig but not in other species tested (rabbit, rat, mouse, and pig). The chain is Complement inhibitor RaCI1 from Rhipicephalus appendiculatus (Brown ear tick).